The sequence spans 135 residues: uncharacterized protein (135 aa).

The next 2 helical transmembrane spans lie at 11-31 (ILFFGLAFILVGFGLILGYLI) and 57-77 (LGTAAAVAGGVIAGELITDAI).

The protein resides in the cell membrane. This is an uncharacterized protein from Methanocaldococcus jannaschii (strain ATCC 43067 / DSM 2661 / JAL-1 / JCM 10045 / NBRC 100440) (Methanococcus jannaschii).